A 259-amino-acid chain; its full sequence is Protein GrpE (259 aa).

2 disordered regions span residues 1–75 and 227–259; these read MNSD…KGSD and GPGP…KDEN. Residues 20-40 show a composition bias toward low complexity; sequence NNPSENFVSSSNSNESVNQVE. A compositionally biased stretch (basic and acidic residues) spans 46-60; that stretch reads EVEHQVKNDSVDTAK. Over residues 61–73 the composition is skewed to polar residues; sequence EQSSTSCESNIKG.

This sequence belongs to the GrpE family. As to quaternary structure, homodimer.

It is found in the cytoplasm. Functionally, participates actively in the response to hyperosmotic and heat shock by preventing the aggregation of stress-denatured proteins, in association with DnaK and GrpE. It is the nucleotide exchange factor for DnaK and may function as a thermosensor. Unfolded proteins bind initially to DnaJ; upon interaction with the DnaJ-bound protein, DnaK hydrolyzes its bound ATP, resulting in the formation of a stable complex. GrpE releases ADP from DnaK; ATP binding to DnaK triggers the release of the substrate protein, thus completing the reaction cycle. Several rounds of ATP-dependent interactions between DnaJ, DnaK and GrpE are required for fully efficient folding. The chain is Protein GrpE from Prochlorococcus marinus (strain NATL1A).